A 383-amino-acid chain; its full sequence is tRNA-specific 2-thiouridylase MnmA (383 aa).

Residues glycine 31 to serine 38 and leucine 57 contribute to the ATP site. Residue cysteine 118 is the Nucleophile of the active site. Cysteine 118 and cysteine 217 are joined by a disulfide. Glycine 143 provides a ligand contact to ATP. Residues lysine 167–glutamine 169 form an interaction with tRNA region. The active-site Cysteine persulfide intermediate is the cysteine 217. The interval arginine 322 to tyrosine 323 is interaction with tRNA.

It belongs to the MnmA/TRMU family.

Its subcellular location is the cytoplasm. The catalysed reaction is S-sulfanyl-L-cysteinyl-[protein] + uridine(34) in tRNA + AH2 + ATP = 2-thiouridine(34) in tRNA + L-cysteinyl-[protein] + A + AMP + diphosphate + H(+). Catalyzes the 2-thiolation of uridine at the wobble position (U34) of tRNA, leading to the formation of s(2)U34. The sequence is that of tRNA-specific 2-thiouridylase MnmA from Synechococcus sp. (strain RCC307).